Here is a 201-residue protein sequence, read N- to C-terminus: LexA repressor (201 aa).

A DNA-binding region (H-T-H motif) is located at residues 29-49; the sequence is VREICKAVGLSSTSSVHFHLK. Residues Ser125 and Lys162 each act as for autocatalytic cleavage activity in the active site.

It belongs to the peptidase S24 family. As to quaternary structure, homodimer.

The enzyme catalyses Hydrolysis of Ala-|-Gly bond in repressor LexA.. In terms of biological role, represses a number of genes involved in the response to DNA damage (SOS response), including recA and lexA. In the presence of single-stranded DNA, RecA interacts with LexA causing an autocatalytic cleavage which disrupts the DNA-binding part of LexA, leading to derepression of the SOS regulon and eventually DNA repair. The polypeptide is LexA repressor (Clostridium botulinum (strain ATCC 19397 / Type A)).